A 499-amino-acid chain; its full sequence is Maturase K (499 aa).

The protein belongs to the intron maturase 2 family. MatK subfamily.

It is found in the plastid. The protein resides in the chloroplast. Functionally, usually encoded in the trnK tRNA gene intron. Probably assists in splicing its own and other chloroplast group II introns. The polypeptide is Maturase K (Batis maritima (Maritime saltwort)).